Reading from the N-terminus, the 469-residue chain is C4b-binding protein (469 aa).

Positions 1–56 are cleaved as a signal peptide; the sequence is MCAKQQQTLLPTRAAHGRLHRNRDAVAWPFSTLCRVSGPTLFQMTFTAALWVAVFG. Sushi domains are found at residues 57–117, 118–178, 179–242, 243–301, 302–357, and 358–415; these read KCGP…SCAK, KHCR…ECVI, VKCG…TCEK, IICS…TCEF, DCDL…QCKA, and LCQK…RCEQ. Cystine bridges form between Cys-58–Cys-103, Cys-88–Cys-115, Cys-120–Cys-160, Cys-146–Cys-176, Cys-181–Cys-223, Cys-209–Cys-240, Cys-245–Cys-287, Cys-273–Cys-299, Cys-303–Cys-343, Cys-329–Cys-355, Cys-359–Cys-400, and Cys-386–Cys-413. Asn-74 carries an N-linked (GlcNAc...) asparagine glycan. N-linked (GlcNAc...) asparagine glycans are attached at residues Asn-227, Asn-275, and Asn-292. 2 N-linked (GlcNAc...) asparagine glycosylation sites follow: Asn-366 and Asn-381. Asn-428 carries an N-linked (GlcNAc...) asparagine glycan.

As to quaternary structure, homoheptamer; not covalently linked. Mouse lacks the beta chain of C4BP.

Its subcellular location is the secreted. Controls the classical pathway of complement activation. It binds as a cofactor to C3b/C4b inactivator (C3bINA), which then hydrolyzes the complement fragment C4b. It also accelerates the degradation of the C4bC2a complex (C3 convertase) by dissociating the complement fragment C2a. Alpha chain binds C4b. It also interacts with serum amyloid P component. The chain is C4b-binding protein (C4bpa) from Mus musculus (Mouse).